The chain runs to 932 residues: MAVVIRLQGLPIVAGTMDIRHFFSGLTIPDGGVHIVGGELGEAFIVFATDEDARLGMMRTGGTIKGSKVTLLLSSKTEMQNMIELSRRRFETANLDIPPANASRSGPPPSSGMSGRVNLPTTVSNFNNPSPSVVTATTSVHESNKNIQTFSTASIGTAPPNMGASFGSPTFSSTVPSTASPMNTVPPPPIPPIPAMPSLPPMPSIPPIPVPPPVPTLPPVPPVPPIPPVPSVPPMTPLPPMSGMPPLNPPPVAPLPAGMNGSGAPMNLNNNLNPMFLGPLNPVNPIQMNSQSSVKPLPINPDDLYVSVHGMPFSAMENDVRDFFHGLRVDAVHLLKDHVGRNNGNGLVKFLSPQDTFEALKRNRMLMIQRYVEVSPATERQWVAAGGHITFKQNMGPSGQSHPPPQTLPRSKSPSGQKRSRSRSPHEAGFCVYLKGLPFEAENKHVIDFFKKLDIVEDSIYIAYGPNGKATGEGFVEFRNEADYKAALCRHKQYMGNRFIQVHPITKKGMLEKIDMIRKRLQNFSYDQREMMLNPEGDVNSAKVCAHITNIPFSITKMDVLQFLEGIPVDENAVHVLVDNNGQGLGQALVQFKNEDDARKSERLHRKKLNGREAFVHVVTLEDMREIEKNPPAQGKKGLKMPVPGNPAVPGMPNAGLPGVGLPSAGLPGAGLPSTGLPGSAITSAGLPGAGMPSAGIPSAGGEEHAFLTVGSKEANNGPPFNFPGNFGGSNAFGPPIPPPGLGGGAFGDARPGMPSVGNSGLPGLGLDVPGFGGGPNNLSGPSGFGGGPQNFGNGPGSLGGPPGFGSGPPGLGSAPGHLGGPPAFGPGPGPGPGPGPIHIGGPPGFASSSGKPGPTVIKVQNMPFTVSIDEILDFFYGYQVIPGSVCLKYNEKGMPTGEAMVAFESRDEATAAVIDLNDRPIGSRKVKLVLG.

Positions 97–116 (IPPANASRSGPPPSSGMSGR) are disordered. The span at 98–116 (PPANASRSGPPPSSGMSGR) shows a compositional bias: low complexity. One can recognise an RRM 1 domain in the interval 304–379 (LYVSVHGMPF…RYVEVSPATE (76 aa)). Residues serine 352 and serine 375 each carry the phosphoserine modification. The interval 393–424 (QNMGPSGQSHPPPQTLPRSKSPSGQKRSRSRS) is disordered. The span at 408 to 417 (LPRSKSPSGQ) shows a compositional bias: polar residues. Residues serine 420, serine 422, and serine 424 each carry the phosphoserine modification. In terms of domain architecture, RRM 2 spans 430–507 (FCVYLKGLPF…RFIQVHPITK (78 aa)). Serine 525 carries the phosphoserine modification. The span at 717-734 (NGPPFNFPGNFGGSNAFG) shows a compositional bias: low complexity. A disordered region spans residues 717 to 853 (NGPPFNFPGN…PGFASSSGKP (137 aa)). Residues 783–811 (SGFGGGPQNFGNGPGSLGGPPGFGSGPPG) are compositionally biased toward gly residues. The segment covering 824 to 836 (AFGPGPGPGPGPG) has biased composition (pro residues). The RRM 3 domain occupies 856 to 932 (TVIKVQNMPF…GSRKVKLVLG (77 aa)).

It localises to the nucleus. The chain is RNA-binding protein 12 (RBM12) from Macaca mulatta (Rhesus macaque).